Reading from the N-terminus, the 200-residue chain is 3-isopropylmalate dehydratase small subunit (200 aa).

This sequence belongs to the LeuD family. LeuD type 1 subfamily. Heterodimer of LeuC and LeuD.

The catalysed reaction is (2R,3S)-3-isopropylmalate = (2S)-2-isopropylmalate. It functions in the pathway amino-acid biosynthesis; L-leucine biosynthesis; L-leucine from 3-methyl-2-oxobutanoate: step 2/4. In terms of biological role, catalyzes the isomerization between 2-isopropylmalate and 3-isopropylmalate, via the formation of 2-isopropylmaleate. This chain is 3-isopropylmalate dehydratase small subunit, found in Campylobacter jejuni subsp. jejuni serotype O:23/36 (strain 81-176).